The sequence spans 195 residues: FMN-dependent NADH:quinone oxidoreductase (195 aa).

Residues serine 10, 16 to 18 (SQS), and 91 to 94 (MYNF) contribute to the FMN site.

Belongs to the azoreductase type 1 family. Homodimer. Requires FMN as cofactor.

The catalysed reaction is 2 a quinone + NADH + H(+) = 2 a 1,4-benzosemiquinone + NAD(+). It carries out the reaction N,N-dimethyl-1,4-phenylenediamine + anthranilate + 2 NAD(+) = 2-(4-dimethylaminophenyl)diazenylbenzoate + 2 NADH + 2 H(+). In terms of biological role, quinone reductase that provides resistance to thiol-specific stress caused by electrophilic quinones. Also exhibits azoreductase activity. Catalyzes the reductive cleavage of the azo bond in aromatic azo compounds to the corresponding amines. The chain is FMN-dependent NADH:quinone oxidoreductase from Aeromonas salmonicida (strain A449).